We begin with the raw amino-acid sequence, 354 residues long: Guanine nucleotide-binding protein alpha-3 subunit (354 aa).

Gly2 carries N-myristoyl glycine lipidation. Cys4 carries the S-palmitoyl cysteine lipid modification. A G-alpha domain is found at 33-354 (KECKILLLGS…TNALKDSGIL (322 aa)). A G1 motif region spans residues 36 to 49 (KILLLGSGESGKST). GTP-binding positions include 41–48 (GSGESGKS), 177–183 (LRARSKT), 202–206 (DVGGQ), 271–274 (NKID), and Ala326. Residues Ser48 and Thr183 each contribute to the Mg(2+) site. The segment at 175-183 (DVLRARSKT) is G2 motif. A G3 motif region spans residues 198–207 (IHLFDVGGQR). The segment at 267–274 (ILFLNKID) is G4 motif. The tract at residues 324–329 (TQATDT) is G5 motif.

It belongs to the G-alpha family. In terms of assembly, g proteins are composed of 3 units; alpha, beta and gamma. The alpha chain contains the guanine nucleotide binding site.

Guanine nucleotide-binding proteins (G proteins) are involved as modulators or transducers in various transmembrane signaling systems. GPA3 plays an active role in transmission of the pheromone signal. The protein is Guanine nucleotide-binding protein alpha-3 subunit (GPA3) of Mycosarcoma maydis (Corn smut fungus).